Consider the following 119-residue polypeptide: V-type proton ATPase subunit F (119 aa).

This sequence belongs to the V-ATPase F subunit family. As to quaternary structure, V-ATPase is a heteromultimeric enzyme composed of a peripheral catalytic V1 complex (components A to H) attached to an integral membrane V0 proton pore complex (components: a, c, c', c'', d, e, f and VOA1).

The protein localises to the vacuole membrane. Its function is as follows. Subunit of the V1 complex of vacuolar(H+)-ATPase (V-ATPase), a multisubunit enzyme composed of a peripheral complex (V1) that hydrolyzes ATP and a membrane integral complex (V0) that translocates protons. V-ATPase is responsible for acidifying and maintaining the pH of intracellular compartments. The sequence is that of V-type proton ATPase subunit F (VMA7) from Vanderwaltozyma polyspora (strain ATCC 22028 / DSM 70294 / BCRC 21397 / CBS 2163 / NBRC 10782 / NRRL Y-8283 / UCD 57-17) (Kluyveromyces polysporus).